The primary structure comprises 114 residues: MSESGKTVTRVDLCEAVYQKVGLSRTESAAFVELVLKEITDCLEKGETVKLSSFGSFMVRKKGERIGRNPKTGTEVPISPRRVMVFKPSAILKQRINNGAAAKTNGDVAKVAAG.

Belongs to the bacterial histone-like protein family. Heterodimer of an alpha and a beta chain.

This protein is one of the two subunits of integration host factor, a specific DNA-binding protein that functions in genetic recombination as well as in transcriptional and translational control. This chain is Integration host factor subunit alpha, found in Afipia carboxidovorans (strain ATCC 49405 / DSM 1227 / KCTC 32145 / OM5) (Oligotropha carboxidovorans).